We begin with the raw amino-acid sequence, 197 residues long: Transmembrane 4 L6 family member 5 (197 aa).

Topologically, residues 1–9 (MCTGKCARC) are cytoplasmic. A helical membrane pass occupies residues 10-30 (VGLSLITLCLVCIVANALLLV). Residues 31-46 (PNGETSWTNTNHLSLQ) are Extracellular-facing. The helical transmembrane segment at 47-67 (VWLMGGFIGGGLMVLCPGIAA) threads the bilayer. Over 68–90 (VRAGGKGCCGAGCCGNRCRMLRS) the chain is Cytoplasmic. The helical transmembrane segment at 91-111 (VFSSAFGVLGAIYCLSVSGAG) threads the bilayer. Residues 91 to 197 (VFSSAFGVLG…DCRKKQDTPH (107 aa)) are interaction with MTOR and CASTOR1. Residues 112 to 157 (LRNGPRCLMNGEWGYHFEDTAGAYLLNRTLWDRCEAPPRVVPWNVT) lie on the Extracellular side of the membrane. 124-129 (WGYHFE) is a binding site for L-arginine. 2 N-linked (GlcNAc...) asparagine glycosylation sites follow: asparagine 138 and asparagine 155. Residues 158–178 (LFSLLVAASCLEIVLCGIQLV) traverse the membrane as a helical segment. The Cytoplasmic portion of the chain corresponds to 179-197 (NATIGVFCGDCRKKQDTPH).

It belongs to the L6 tetraspanin family. As to quaternary structure, interacts with MTOR; the interaction is positively regulated by arginine and is negatively regulated by leucine. Interacts with SLC38A9. Interacts with SLC7A1; the interaction is negatively regulated by arginine. Interacts with CASTOR1; the interaction is positively regulated by leucine and is negatively regulated by arginine. Intestine. Overexpressed in pancreatic cancers.

It localises to the lysosome membrane. Its subcellular location is the cell membrane. In terms of biological role, acts as a lysosomal membrane arginine sensor. Forms a complex with MTOR and SLC38A9 on lysosomal membranes in an arginine-regulated manner, leading to arginine efflux which enables the activation of mTORC1 which subsequently leads to RPS6KB1 and EIF4EBP1 phosphorylations. Facilitates cell cycle G1/S phase progression and the translocation of the CDK4-CCND1 complex into the nucleus. CDKN1B and RHOA/ROCK signaling activity are involved in TM4SF5-mediated acceleration of G1/S phase progression. The chain is Transmembrane 4 L6 family member 5 (TM4SF5) from Homo sapiens (Human).